The sequence spans 241 residues: 2,3,4,5-tetrahydropyridine-2,6-dicarboxylate N-acetyltransferase (241 aa).

It belongs to the transferase hexapeptide repeat family. DapH subfamily.

The enzyme catalyses (S)-2,3,4,5-tetrahydrodipicolinate + acetyl-CoA + H2O = L-2-acetamido-6-oxoheptanedioate + CoA. The protein operates within amino-acid biosynthesis; L-lysine biosynthesis via DAP pathway; LL-2,6-diaminopimelate from (S)-tetrahydrodipicolinate (acetylase route): step 1/3. Its function is as follows. Catalyzes the transfer of an acetyl group from acetyl-CoA to tetrahydrodipicolinate. This chain is 2,3,4,5-tetrahydropyridine-2,6-dicarboxylate N-acetyltransferase, found in Thermoanaerobacter sp. (strain X514).